Reading from the N-terminus, the 853-residue chain is MAEAEEQETESLEESTDESEEESEEEPKLKYERLSNGVTEILQKDAASCMTVHDKFLALGTHYGKVYLLDVQGNITQKFDVSPVKINQISLDDSGEHMGVCSEDGKLQVFGLYSGEEFHETFDCPIKIIAVHPQFVRSSCKQFVTGGKKLLLFERTWMNRWKSSVLHEGEGNIRSVKWRGHLIAWANNMGVKVFDITSKQRISNVPRDDISLRPDMYPCSLCWKDNVTLIIGWGTSIKICSVKERHASEMRDLPSRYVEIVSQFETEFYISGLAPLCDQLVVLSYVKEVSEKTEREYCARPRLDIIQPLPETCEEISSDALTVRGFQENECRDYHLEYSEGESLFYVVSPRDVVVAKERDQDDHIDWLLEKKKYEEALMAAEISQRNIKRHKILDIGLAYVNHLVERGEYDMAARKCQKILGKNASLWEYEVYKFKEIGQLKAISPYLPRGDPVLKPLIYEMILHEFLESDYEGFATLIREWPGDLYNNSVIVQAVRDHLKKDSQNKTLLKTLAELYTYDKNYGNALEIYLTLRHKDVFQLIHKHNLFSSIKDKIVLLMDFDSEKAVDMLLDNEDKISIKKVVEELEDRPELQHVYLHKLFKRDHHKGQRYHEKQISLYAEYDRPNLLPFLRDSTHCPLEKALEICQQRNFVEETVYLLSRMGNSRSALKMIMEELHDVDKAIEFAKEQDDGELWEDLILYSIDKPPFITGLLNNIGTHVDPILLIHRIKEGMEIPNLRDSLVKILQDYNLQILLREGCKKILVADSLSLLKKMHRTQMKGVLVDEENICESCLSPILPTDAAKPFSVVVFHCRHMFHKECLPMPSMNAPAQYCNICSAKNRGPGSAILEMKK.

Over residues 1–25 the composition is skewed to acidic residues; the sequence is MAEAEEQETESLEESTDESEEESEE. Residues 1–32 form a disordered region; it reads MAEAEEQETESLEESTDESEEESEEEPKLKYE. The interval 1-539 is interaction with ARL8B; it reads MAEAEEQETE…YLTLRHKDVF (539 aa). A CHCR repeat occupies 567-711; that stretch reads VDMLLDNEDK…SIDKPPFITG (145 aa). The segment at 790–838 adopts an RING-type; atypical zinc-finger fold; it reads CESCLSPILPTDAAKPFSVVVFHCRHMFHKECLPMPSMNAPAQYCNICS.

The protein belongs to the VPS41 family. Component of the putative homotypic fusion and vacuole protein sorting (HOPS) complex; the core of which composed of the class C Vps proteins VPS11, VPS16, VPS18 and VPS33A, is associated with VPS39 and VPS41. Interacts with RILP, MON1B. Interacts with ARL8B (GTP-bound form); involved in recruitment to lysosomes and probably hierarchial assembly of the HOPS complex at lysosomal membranes. In vitro can self-assemble into a lattice. Associates with adapter protein complex 3 (AP-3) and clathrin:AP-3 complexes. Interacts with STX17; this interaction is increased in the absence of TMEM39A. Interacts with ARL8B and PLEKHM1; the interaction mediates the recruitment of the HOPS complex to lysosomes. Interacts with RAB7, RAB2A and RAB2B. Interacts with RAB39A (GTP-bound) and RAB39B (GTP-bound); interaction with RAB39A leads to a functional HOPS complex that mediates autophagosome-lysosome membrane tethering.

It localises to the endosome membrane. It is found in the late endosome membrane. The protein localises to the early endosome membrane. Its subcellular location is the lysosome membrane. The protein resides in the golgi apparatus. It localises to the trans-Golgi network. It is found in the cytoplasmic vesicle. The protein localises to the clathrin-coated vesicle. Its subcellular location is the cytoplasm. The protein resides in the cytosol. In terms of biological role, plays a role in vesicle-mediated protein trafficking to lysosomal compartments including the endocytic membrane transport and autophagic pathways. Believed to act in part as a core component of the putative HOPS endosomal tethering complex is proposed to be involved in the Rab5-to-Rab7 endosome conversion probably implicating MON1A/B, and via binding SNAREs and SNARE complexes to mediate tethering and docking events during SNARE-mediated membrane fusion. The HOPS complex is proposed to be recruited to Rab7 on the late endosomal membrane and to regulate late endocytic, phagocytic and autophagic traffic towards lysosomes. Involved in homotypic vesicle fusions between late endosomes and in heterotypic fusions between late endosomes and lysosomes implicated in degradation of endocytosed cargo. Required for fusion of autophagosomes with lysosomes. Links the HOPS complex to endosomal via its association with RILP and to lysosomal membranes via its association with ARL8B, suggesting that these interactions may bring the compartments to close proximity for fusion. Involved in the direct trans-Golgi network to late endosomes transport of lysosomal membrane proteins independently of HOPS. Involved in sorting to the regulated secretory pathway presumably implicating the AP-3 adapter complex. May play a role in HOPS-independent function in the regulated secretory pathway. The chain is Vacuolar protein sorting-associated protein 41 homolog (Vps41) from Mus musculus (Mouse).